The sequence spans 192 residues: Type-4 uracil-DNA glycosylase (192 aa).

[4Fe-4S] cluster contacts are provided by Cys18 and Cys21. Uracil-binding positions include 45–47, Phe59, and Asn85; that span reads GEG. Residues Cys89 and Cys105 each coordinate [4Fe-4S] cluster. His161 serves as a coordination point for uracil.

This sequence belongs to the uracil-DNA glycosylase (UDG) superfamily. Type 4 (UDGa) family.

The enzyme catalyses Hydrolyzes single-stranded DNA or mismatched double-stranded DNA and polynucleotides, releasing free uracil.. Its function is as follows. Removes uracil bases that are present in DNA as a result of either deamination of cytosine or misincorporation of dUMP instead of dTMP. Can remove uracil from double-stranded DNA containing either a U/G or U/A base pair as well as from single-stranded DNA. This Thermotoga maritima (strain ATCC 43589 / DSM 3109 / JCM 10099 / NBRC 100826 / MSB8) protein is Type-4 uracil-DNA glycosylase.